Reading from the N-terminus, the 91-residue chain is Cell division protein ZapA (91 aa).

The stretch at 59 to 86 forms a coiled coil; that stretch reads TAVNIANEYLKLKEEYDRLAAKLRREKG.

Belongs to the ZapA family. Type 2 subfamily. As to quaternary structure, homodimer. Interacts with FtsZ.

Its subcellular location is the cytoplasm. Its function is as follows. Activator of cell division through the inhibition of FtsZ GTPase activity, therefore promoting FtsZ assembly into bundles of protofilaments necessary for the formation of the division Z ring. It is recruited early at mid-cell but it is not essential for cell division. The protein is Cell division protein ZapA of Geobacillus thermodenitrificans (strain NG80-2).